The following is a 312-amino-acid chain: Olfactory receptor 2L8 (312 aa).

At 1–24 (MENYNQTSTDFILLGLFPPSRIDL) the chain is on the extracellular side. N-linked (GlcNAc...) asparagine glycosylation occurs at Asn-5. The helical transmembrane segment at 25-48 (FFFILIVFIFLMALIGNLSMILLI) threads the bilayer. Residues 49–56 (FLDTHLHT) lie on the Cytoplasmic side of the membrane. The helical transmembrane segment at 57-78 (PMYFLLSQLSLIDLNYISTIVP) threads the bilayer. Residues 79 to 99 (KMASDFLHGNKSISFTGCGIQ) are Extracellular-facing. A glycan (N-linked (GlcNAc...) asparagine) is linked at Asn-88. Cys-96 and Cys-188 are disulfide-bonded. Residues 100 to 119 (SFFFLALGGAEALLLASMAY) traverse the membrane as a helical segment. The Cytoplasmic segment spans residues 120 to 138 (DRYIAICFPLHYLIRMSKR). A helical membrane pass occupies residues 139 to 157 (VCVLMITGSWIIGSINACA). The Extracellular portion of the chain corresponds to 158–194 (HTVYVLHIPYCRSRAINHFFCDVPAMVTLACMDTWVY). A helical transmembrane segment spans residues 195–218 (EGTVFLSATIFLVFPFIGISCSYG). The Cytoplasmic portion of the chain corresponds to 219-235 (QVLFAVYHMKSAEGRKK). A helical transmembrane segment spans residues 236–258 (AYLTCSTHLTVVTFYYAPFVYTY). Over 259–271 (LRPRSLRSPTEDK) the chain is Extracellular. Residues 272–291 (VLAVFYTILTPMLNPIIYSL) traverse the membrane as a helical segment. At 292 to 312 (RNKEVMGALTRVSQRICSVKM) the chain is on the cytoplasmic side.

It belongs to the G-protein coupled receptor 1 family.

The protein resides in the cell membrane. Its function is as follows. Odorant receptor. This Homo sapiens (Human) protein is Olfactory receptor 2L8 (OR2L8).